A 141-amino-acid polypeptide reads, in one-letter code: MQFFISSAILFSYAFCQSIPNVILTGEPRVVARRILNVDMKAAQQLALPDDQQHVRYQVNVVRNQENPSDSTYLTGERTPVTVYRRILRPARITFTGDGVITDSWQGTSDAVEMESWTLNRRPTIDGSFVQPTQNQQGAFH.

This is an uncharacterized protein from Caenorhabditis elegans.